The primary structure comprises 365 residues: Phospho-N-acetylmuramoyl-pentapeptide-transferase (365 aa).

The next 10 membrane-spanning stretches (helical) occupy residues 22–42 (YISV…LALG), 74–94 (TMGG…WGDL), 95–115 (TSIY…IGFF), 134–154 (KFAL…YLLS), 168–188 (SLYI…IING), 201–221 (GLAI…AYIE), 240–260 (LAEV…FLWF), 267–287 (VFMG…IAVM), 292–312 (LIFF…MLQV), and 342–362 (KVVI…LAAI).

The protein belongs to the glycosyltransferase 4 family. MraY subfamily. Mg(2+) is required as a cofactor.

Its subcellular location is the cell inner membrane. The catalysed reaction is UDP-N-acetyl-alpha-D-muramoyl-L-alanyl-gamma-D-glutamyl-meso-2,6-diaminopimeloyl-D-alanyl-D-alanine + di-trans,octa-cis-undecaprenyl phosphate = di-trans,octa-cis-undecaprenyl diphospho-N-acetyl-alpha-D-muramoyl-L-alanyl-D-glutamyl-meso-2,6-diaminopimeloyl-D-alanyl-D-alanine + UMP. It functions in the pathway cell wall biogenesis; peptidoglycan biosynthesis. Functionally, catalyzes the initial step of the lipid cycle reactions in the biosynthesis of the cell wall peptidoglycan: transfers peptidoglycan precursor phospho-MurNAc-pentapeptide from UDP-MurNAc-pentapeptide onto the lipid carrier undecaprenyl phosphate, yielding undecaprenyl-pyrophosphoryl-MurNAc-pentapeptide, known as lipid I. The polypeptide is Phospho-N-acetylmuramoyl-pentapeptide-transferase (Francisella tularensis subsp. novicida (strain U112)).